A 129-amino-acid polypeptide reads, in one-letter code: Lysozyme C (129 aa).

Residues 1-129 form the C-type lysozyme domain; that stretch reads KVYGRCELAA…VNAWTRGCRL (129 aa). Intrachain disulfides connect Cys-6/Cys-127, Cys-30/Cys-115, Cys-64/Cys-80, and Cys-76/Cys-94. Active-site residues include Glu-35 and Asp-52.

Belongs to the glycosyl hydrolase 22 family. In terms of assembly, monomer.

The protein resides in the secreted. It carries out the reaction Hydrolysis of (1-&gt;4)-beta-linkages between N-acetylmuramic acid and N-acetyl-D-glucosamine residues in a peptidoglycan and between N-acetyl-D-glucosamine residues in chitodextrins.. In terms of biological role, lysozymes have primarily a bacteriolytic function; those in tissues and body fluids are associated with the monocyte-macrophage system and enhance the activity of immunoagents. This Syrmaticus soemmerringii (Copper pheasant) protein is Lysozyme C (LYZ).